Here is a 60-residue protein sequence, read N- to C-terminus: Sec-independent protein translocase protein TatA (60 aa).

The chain crosses the membrane as a helical span at residues Met1–Gly21.

It belongs to the TatA/E family. The Tat system comprises two distinct complexes: a TatABC complex, containing multiple copies of TatA, TatB and TatC subunits, and a separate TatA complex, containing only TatA subunits. Substrates initially bind to the TatABC complex, which probably triggers association of the separate TatA complex to form the active translocon.

It is found in the cell membrane. Its function is as follows. Part of the twin-arginine translocation (Tat) system that transports large folded proteins containing a characteristic twin-arginine motif in their signal peptide across membranes. TatA could form the protein-conducting channel of the Tat system. The chain is Sec-independent protein translocase protein TatA from Corynebacterium glutamicum (strain R).